A 181-amino-acid polypeptide reads, in one-letter code: Isopentenyl-diphosphate Delta-isomerase (181 aa).

The Mn(2+) site is built by H25 and H32. The 135-residue stretch at 30-164 (PLHLAFSCWL…PWAFSPWMVM (135 aa)) folds into the Nudix hydrolase domain. C67 is a catalytic residue. C67 is a Mg(2+) binding site. H69 is a Mn(2+) binding site. E87 lines the Mg(2+) pocket. Mn(2+) contacts are provided by E114 and E116. The active site involves E116.

Belongs to the IPP isomerase type 1 family. In terms of assembly, homodimer. Mg(2+) serves as cofactor. Mn(2+) is required as a cofactor.

The protein resides in the cytoplasm. The catalysed reaction is isopentenyl diphosphate = dimethylallyl diphosphate. It participates in isoprenoid biosynthesis; dimethylallyl diphosphate biosynthesis; dimethylallyl diphosphate from isopentenyl diphosphate: step 1/1. In terms of biological role, catalyzes the 1,3-allylic rearrangement of the homoallylic substrate isopentenyl (IPP) to its highly electrophilic allylic isomer, dimethylallyl diphosphate (DMAPP). The sequence is that of Isopentenyl-diphosphate Delta-isomerase from Salmonella typhi.